The primary structure comprises 792 residues: Probable exo-1,4-beta-xylosidase xlnD (792 aa).

Residues 1 to 20 (MSAIKSIATVLAAILPSVLA) form the signal peptide. N-linked (GlcNAc...) asparagine glycans are attached at residues Asn-23, Asn-87, Asn-142, and Asn-246. The active site involves Asp-310. Residues Asn-326, Asn-385, Asn-391, Asn-404, Asn-438, Asn-475, Asn-479, Asn-516, Asn-677, and Asn-699 are each glycosylated (N-linked (GlcNAc...) asparagine).

Belongs to the glycosyl hydrolase 3 family.

Its subcellular location is the secreted. The enzyme catalyses Hydrolysis of (1-&gt;4)-beta-D-xylans, to remove successive D-xylose residues from the non-reducing termini.. It participates in glycan degradation; xylan degradation. Xylan 1,4-beta-xylosidase involved in the hydrolysis of xylan, a major structural heterogeneous polysaccharide found in plant biomass representing the second most abundant polysaccharide in the biosphere, after cellulose. This chain is Probable exo-1,4-beta-xylosidase xlnD (xlnD), found in Aspergillus clavatus (strain ATCC 1007 / CBS 513.65 / DSM 816 / NCTC 3887 / NRRL 1 / QM 1276 / 107).